Here is a 117-residue protein sequence, read N- to C-terminus: Large ribosomal subunit protein uL18 (117 aa).

This sequence belongs to the universal ribosomal protein uL18 family. As to quaternary structure, part of the 50S ribosomal subunit; part of the 5S rRNA/L5/L18/L25 subcomplex. Contacts the 5S and 23S rRNAs.

This is one of the proteins that bind and probably mediate the attachment of the 5S RNA into the large ribosomal subunit, where it forms part of the central protuberance. The protein is Large ribosomal subunit protein uL18 of Enterobacter sp. (strain 638).